A 197-amino-acid polypeptide reads, in one-letter code: Adrenodoxin-like protein 1, mitochondrial (197 aa).

A mitochondrion-targeting transit peptide spans 1–35; sequence MIGHRISRLGSTIVKQLAREGYLATYGTKNLHRSY. The region spanning 79–184 is the 2Fe-2S ferredoxin-type domain; sequence EKITIIFVDK…GVRLAIPSAT (106 aa). [2Fe-2S] cluster is bound by residues Cys118, Cys124, Cys127, and Cys165.

The protein belongs to the adrenodoxin/putidaredoxin family. Requires [2Fe-2S] cluster as cofactor.

The protein localises to the mitochondrion matrix. Functionally, associates in vitro with the adrenodoxin reductase MFDR to form an efficient low potential electron transfer chain that is able to reduce cytochrome C. Functions as accessory mitochondrial protein involved with BIO2 in the plant biotin synthase reaction. In Arabidopsis thaliana (Mouse-ear cress), this protein is Adrenodoxin-like protein 1, mitochondrial.